Here is a 545-residue protein sequence, read N- to C-terminus: Lysine--tRNA ligase (545 aa).

Positions 41-49 (PSGVPHLGH) match the 'HIGH' region motif. Positions 306–310 (ALSSS) match the 'KMSKS' region motif.

It belongs to the class-I aminoacyl-tRNA synthetase family.

The protein localises to the cytoplasm. The enzyme catalyses tRNA(Lys) + L-lysine + ATP = L-lysyl-tRNA(Lys) + AMP + diphosphate. The protein is Lysine--tRNA ligase of Natronomonas pharaonis (strain ATCC 35678 / DSM 2160 / CIP 103997 / JCM 8858 / NBRC 14720 / NCIMB 2260 / Gabara) (Halobacterium pharaonis).